The chain runs to 289 residues: 3-methyl-2-oxobutanoate hydroxymethyltransferase (289 aa).

Residues Asp-58 and Asp-99 each coordinate Mg(2+). Residues 58–59, Asp-99, and Lys-128 each bind 3-methyl-2-oxobutanoate; that span reads DS. Glu-130 is a Mg(2+) binding site. Glu-197 functions as the Proton acceptor in the catalytic mechanism.

The protein belongs to the PanB family. In terms of assembly, homodecamer; pentamer of dimers. It depends on Mg(2+) as a cofactor.

Its subcellular location is the cytoplasm. It carries out the reaction 3-methyl-2-oxobutanoate + (6R)-5,10-methylene-5,6,7,8-tetrahydrofolate + H2O = 2-dehydropantoate + (6S)-5,6,7,8-tetrahydrofolate. The protein operates within cofactor biosynthesis; (R)-pantothenate biosynthesis; (R)-pantoate from 3-methyl-2-oxobutanoate: step 1/2. Catalyzes the reversible reaction in which hydroxymethyl group from 5,10-methylenetetrahydrofolate is transferred onto alpha-ketoisovalerate to form ketopantoate. In Leptothrix cholodnii (strain ATCC 51168 / LMG 8142 / SP-6) (Leptothrix discophora (strain SP-6)), this protein is 3-methyl-2-oxobutanoate hydroxymethyltransferase.